Reading from the N-terminus, the 357-residue chain is Multiple sugar-binding periplasmic protein SbpA (357 aa).

The N-terminal stretch at 1-20 (MSSSFTTTLAGMAVGMLVLA) is a signal peptide.

It belongs to the bacterial solute-binding protein 2 family.

The protein localises to the periplasm. Mediates chemotaxis towards D-galactose, L-arabinose and D-fucose but not towards D-fructose. Probably part of a binding-protein high affinity uptake system. This Azospirillum brasilense protein is Multiple sugar-binding periplasmic protein SbpA (sbpA).